Reading from the N-terminus, the 165-residue chain is MPGENSFDIVSDFDQQELVNAVDQTLREVQTRYDLKDAGVTLTLSKTELIIEADSEMALRSVRDVLETKALRRKLSLKIFDYGKPTDASGGRVRQVVTLRRGIDSELAKKIAKMIRDRFPKVQPRIQGDALRVTGKSRDELQAVIAFLRERESEIPVPLQMTNYR.

Belongs to the YajQ family.

In terms of biological role, nucleotide-binding protein. The polypeptide is Nucleotide-binding protein Cagg_1607 (Chloroflexus aggregans (strain MD-66 / DSM 9485)).